Reading from the N-terminus, the 773-residue chain is Probable serine/threonine-protein kinase MARK-C (773 aa).

The span at 1-27 shows a compositional bias: polar residues; that stretch reads MESNKSSSHGDVSTSPSFLNNHHQFNN. The interval 1–32 is disordered; that stretch reads MESNKSSSHGDVSTSPSFLNNHHQFNNGGDII. The region spanning 46–300 is the Protein kinase domain; that stretch reads YEVGKTLGNG…IQELKNHPWT (255 aa). ATP is bound by residues 52-60 and K75; that span reads LGNGTFGKV. The Proton acceptor role is filled by D171. Positions 362–390 form a coiled coil; it reads RYASKEVENLKSKLELLSKRKKSFSDKRN. Disordered regions lie at residues 382–445, 462–487, and 558–588; these read KKSF…SQGS, DNDIENSDNNKSSSLTRRSSDPNKDI, and YSIQQQQLQQQQQQQQEQHKEDNNKPNTNLR. Residues 405–443 show a composition bias toward low complexity; it reads DLSSNNNNNQQQQNSPPSKTNSSSTSSSNRESNNNSPSQ. Residues 445–474 adopt a coiled-coil conformation; that stretch reads SIKEISLDELDNHIEQLDNDIENSDNNKSS. The span at 468 to 478 shows a compositional bias: polar residues; that stretch reads SDNNKSSSLTR. A compositionally biased stretch (low complexity) spans 561 to 573; it reads QQQQLQQQQQQQQ. A KA1 domain is found at 724 to 773; it reads CFDEDNSVKFQIEIVKICNLDLTGIQLKRLSGDTWKYKDICTELVESMKL.

Belongs to the protein kinase superfamily. CAMK Ser/Thr protein kinase family. SNF1 subfamily.

It catalyses the reaction L-seryl-[protein] + ATP = O-phospho-L-seryl-[protein] + ADP + H(+). The catalysed reaction is L-threonyl-[protein] + ATP = O-phospho-L-threonyl-[protein] + ADP + H(+). The polypeptide is Probable serine/threonine-protein kinase MARK-C (mrkC) (Dictyostelium discoideum (Social amoeba)).